A 493-amino-acid chain; its full sequence is Cobyric acid synthase (493 aa).

A GATase cobBQ-type domain is found at 246-440; it reads PIDIAVIKMP…IHGVFDGVAF (195 aa). Cysteine 326 serves as the catalytic Nucleophile. Residue histidine 432 is part of the active site.

This sequence belongs to the CobB/CobQ family. CobQ subfamily.

The protein operates within cofactor biosynthesis; adenosylcobalamin biosynthesis. Functionally, catalyzes amidations at positions B, D, E, and G on adenosylcobyrinic A,C-diamide. NH(2) groups are provided by glutamine, and one molecule of ATP is hydrogenolyzed for each amidation. The protein is Cobyric acid synthase of Clostridium botulinum (strain Loch Maree / Type A3).